Consider the following 797-residue polypeptide: MHIISAIYSARVQNCAAPTQPLVPSCQTHSAASHTPPGPSARLPSPARPEASTRTQGKSHAGAAAAAVEGTAAPEDEAADNSSEEDAGPGSHGEGAGEGGGSGTWPGNGGGPQPIHRCAGSVVAGATRGGCVAATRLYLAAVQPSGGLSICANTKPRAGPDPGSDSSEDERPNRNTVGNVPLVWYKDEEHIGYDIEGARITKAQRKDRLQQLLDRNDSKKALRTIYDPYNDEEVTLSKEELAMVMRIRAGQFPHLEVNPHETEHTWFTDPRDAEVMPIVDRPEPKSRFVPSKWEEQKIVKLVRAIRKGWIKKTPEQEEEERAAGPPAYLLWADDGLTDEAAAKAGSGLTYIPAPKLQLPGHADSYNPPAEYLPTEEEVAAWQMADPEDRPKALPQAFTSLRAVPAYTDFIKERFERCLDLYLCPRVRRKRLDIKSPEQLVPQLPKPRDLQPFPTTLALAYEGHMGPVASIAPDPWTGQWLLSGGQDGTLRLWEVRTGRCWRTWVLEGPVSAVAWCPQAGLRLVSAAVGNCVVLLPSGTGPEEAEEAAAEALRVRGPGRGGGRWVRGGPEEASSSGAGLAVRLRFPVRSLAWHGRGDYFASVAPTGNTQAVVVHQLSKRASQNPFRKNRGRVVRVAFHPTKPFFFVATQNHVRVYNLAKQALAKKLLGGGGVLSCLALHPGGDHVLVGSDDKRVAWYDLDLSTKPYKALRYHSAPPRAVAFHRSYPLFASAADDGTVQVFHGMVYADLLTNPLIVPVKILRGGHTVTASEGVADCAFHPTQPWIFTAGADSKILLYCN.

Disordered regions lie at residues 22–112 (LVPS…GGGP) and 149–177 (SICA…RNTV). The span at 61–73 (AGAAAAAVEGTAA) shows a compositional bias: low complexity. The segment covering 74–87 (PEDEAADNSSEEDA) has biased composition (acidic residues). Gly residues predominate over residues 90–112 (GSHGEGAGEGGGSGTWPGNGGGP). WD repeat units lie at residues 462-502 (GHMG…CWRT), 504-544 (VLEG…EEAE), 581-623 (RLRF…SQNP), 626-664 (KNRG…LAKK), 667-706 (GGGG…KPYK), 710-749 (YHSA…DLLT), and 766-797 (TASE…LYCN).

Belongs to the WD repeat BOP1/ERB1 family.

It localises to the nucleus. The protein resides in the nucleolus. The protein localises to the nucleoplasm. Functionally, required for maturation of ribosomal RNAs and formation of the large ribosomal subunit. The protein is Ribosome biogenesis protein BOP1 homolog of Chlamydomonas reinhardtii (Chlamydomonas smithii).